A 363-amino-acid polypeptide reads, in one-letter code: UDP-N-acetylglucosamine--N-acetylmuramyl-(pentapeptide) pyrophosphoryl-undecaprenol N-acetylglucosamine transferase (363 aa).

UDP-N-acetyl-alpha-D-glucosamine contacts are provided by residues 14–16 (TGG), R171, S200, and Q290.

Belongs to the glycosyltransferase 28 family. MurG subfamily.

The protein resides in the cell inner membrane. The enzyme catalyses di-trans,octa-cis-undecaprenyl diphospho-N-acetyl-alpha-D-muramoyl-L-alanyl-D-glutamyl-meso-2,6-diaminopimeloyl-D-alanyl-D-alanine + UDP-N-acetyl-alpha-D-glucosamine = di-trans,octa-cis-undecaprenyl diphospho-[N-acetyl-alpha-D-glucosaminyl-(1-&gt;4)]-N-acetyl-alpha-D-muramoyl-L-alanyl-D-glutamyl-meso-2,6-diaminopimeloyl-D-alanyl-D-alanine + UDP + H(+). It participates in cell wall biogenesis; peptidoglycan biosynthesis. Functionally, cell wall formation. Catalyzes the transfer of a GlcNAc subunit on undecaprenyl-pyrophosphoryl-MurNAc-pentapeptide (lipid intermediate I) to form undecaprenyl-pyrophosphoryl-MurNAc-(pentapeptide)GlcNAc (lipid intermediate II). The polypeptide is UDP-N-acetylglucosamine--N-acetylmuramyl-(pentapeptide) pyrophosphoryl-undecaprenol N-acetylglucosamine transferase (Borreliella afzelii (strain PKo) (Borrelia afzelii)).